The sequence spans 69 residues: Guanine nucleotide-binding protein G(I)/G(S)/G(O) subunit gamma-T2 (69 aa).

The disordered stretch occupies residues 47–69 (DPLLKGIPEDKNPFKEKGGCMIS). The segment covering 53–69 (IPEDKNPFKEKGGCMIS) has biased composition (basic and acidic residues). A Cysteine methyl ester modification is found at C66. C66 carries the S-farnesyl cysteine lipid modification. Residues 67–69 (MIS) constitute a propeptide, removed in mature form.

The protein belongs to the G protein gamma family. In terms of assembly, g proteins are composed of 3 units, alpha, beta and gamma.

Its subcellular location is the cell membrane. Guanine nucleotide-binding proteins (G proteins) are involved as a modulator or transducer in various transmembrane signaling systems. The beta and gamma chains are required for the GTPase activity, for replacement of GDP by GTP, and for G protein-effector interaction. The chain is Guanine nucleotide-binding protein G(I)/G(S)/G(O) subunit gamma-T2 (GNGT2) from Canis lupus familiaris (Dog).